The primary structure comprises 388 residues: Norsolorinic acid reductase (388 aa).

Catalysis depends on Tyr-74, which acts as the Proton donor. NADP(+) is bound at residue 233–243; sequence GVLGRGQFRSA.

The protein belongs to the aldo/keto reductase family. Aldo/keto reductase 2 subfamily.

The protein operates within mycotoxin biosynthesis; aflatoxin biosynthesis. The sequence is that of Norsolorinic acid reductase (norA) from Aspergillus flavus (strain ATCC 200026 / FGSC A1120 / IAM 13836 / NRRL 3357 / JCM 12722 / SRRC 167).